A 207-amino-acid chain; its full sequence is Ribosomal RNA small subunit methyltransferase G (207 aa).

S-adenosyl-L-methionine contacts are provided by residues Gly-73, Leu-78, 124–125 (VE), and Arg-139.

This sequence belongs to the methyltransferase superfamily. RNA methyltransferase RsmG family.

It localises to the cytoplasm. It catalyses the reaction guanosine(527) in 16S rRNA + S-adenosyl-L-methionine = N(7)-methylguanosine(527) in 16S rRNA + S-adenosyl-L-homocysteine. Its function is as follows. Specifically methylates the N7 position of guanine in position 527 of 16S rRNA. In Salmonella choleraesuis (strain SC-B67), this protein is Ribosomal RNA small subunit methyltransferase G.